A 1744-amino-acid polypeptide reads, in one-letter code: Tensin-1 (1744 aa).

The tract at residues 15–55 (SPAVNYELPSPGQSITKQVDTPDATRSPRGGQAHRKASRSM) is disordered. The 173-residue stretch at 58–230 (TAAMESSCEL…HYFSGLLSGS (173 aa)) folds into the Phosphatase tensin-type domain. One can recognise a C2 tensin-type domain in the interval 235–361 (NKPLFLHHVI…GKVEFVFSYG (127 aa)). 7 disordered regions span residues 467–505 (TLSVSSDSGNSTASTKTDRTDEPGAPGAPTGHAVLSPEE), 569–589 (DELPNQDGHSVGSLGTLSSLD), 666–686 (AQEHLAGYPQRQPASTSPAWL), 724–797 (PQAP…APSR), 934–956 (GSQQLLVSSPPSPTAPAQSQLPH), 982–1077 (RVAG…PGLA), and 1156–1437 (VPSP…GSAV). Positions 468–481 (LSVSSDSGNSTAST) are enriched in polar residues. Residues 580–589 (GSLGTLSSLD) show a composition bias toward low complexity. Positions 728-753 (ARSTSSREAVQRGLNSWQQQGGSRPP) are enriched in polar residues. The segment covering 763-773 (SHSPSLSSCSP) has biased composition (low complexity). Residues 774–783 (QPSPLQPMPP) are compositionally biased toward pro residues. Basic and acidic residues-rich tracts occupy residues 1004–1014 (TPSDSHYEKSS) and 1041–1054 (RPKEPHLHSYKEAF). The span at 1060–1069 (ASPSSLTSGG) shows a compositional bias: polar residues. Low complexity-rich tracts occupy residues 1156-1169 (VPSPVSTSSPIHSV) and 1208-1220 (SAHSSYQTSSPSS). Composition is skewed to polar residues over residues 1344–1355 (LSRQSSASGYQP), 1370–1380 (GTSTPHSSSPD), and 1405–1420 (ERSNSLPNYATVNGKA). Over residues 1421–1435 (SSPLSSGMSSPSSGS) the composition is skewed to low complexity. Positions 1472-1581 (WYKPDISREQ…ALPCKLVIPD (110 aa)) constitute an SH2 domain. A PTB domain is found at 1607–1743 (ACNVLFINSV…SRVMLGSGQK (137 aa)).

This sequence belongs to the PTEN phosphatase protein family. As to quaternary structure, binds to actin filaments. Interacts with phosphotyrosine-containing proteins. Tyrosine phosphorylated. As to expression, heart, gizzard, lung and skeletal muscle.

Its subcellular location is the cell surface. It is found in the cell junction. The protein resides in the focal adhesion. The protein localises to the cytoplasm. It localises to the cytoskeleton. In terms of biological role, may act as a protein phosphatase and/or a lipid phosphatase. Involved in fibrillar adhesion formation. Plays a role in cell polarization and migration. May be involved in cartilage development and in linking signal transduction pathways to the cytoskeleton. This is Tensin-1 (TNS1) from Gallus gallus (Chicken).